The chain runs to 664 residues: Peroxisomal acyl-coenzyme A oxidase 1 (664 aa).

The FAD site is built by Tyr135, Gln137, Thr138, Ser144, Gly177, Arg310, Gln330, Arg333, Gly401, and Thr422. Glu424 serves as the catalytic Proton acceptor. Asp426 contacts FAD. Cys467 and Cys576 form a disulfide bridge. The Microbody targeting signal motif lies at 662–664; it reads ARL.

This sequence belongs to the acyl-CoA oxidase family. As to quaternary structure, homodimer. FAD serves as cofactor. In terms of tissue distribution, expressed mainly in flowers and young seedlings. Lower expression in roots, leaves and bracts.

The protein resides in the peroxisome. It catalyses the reaction a 2,3-saturated acyl-CoA + O2 = a (2E)-enoyl-CoA + H2O2. Catalyzes the desaturation of both long- and medium-chain acyl-CoAs to 2-trans-enoyl-CoAs. Most active with C14-CoA. Activity on long-chain mono-unsaturated substrates is 40% higher than with the corresponding saturated substrates. Seems to be an important factor in the general metabolism of root tips. May be involved in the biosynthesis of jasmonic acid. The polypeptide is Peroxisomal acyl-coenzyme A oxidase 1 (Arabidopsis thaliana (Mouse-ear cress)).